A 308-amino-acid polypeptide reads, in one-letter code: tRNA dimethylallyltransferase (308 aa).

Position 9 to 16 (9 to 16 (GPTAVGKT)) interacts with ATP. 11-16 (TAVGKT) lines the substrate pocket. Residues 34 to 37 (DSMQ) are interaction with substrate tRNA.

Belongs to the IPP transferase family. In terms of assembly, monomer. Mg(2+) serves as cofactor.

The catalysed reaction is adenosine(37) in tRNA + dimethylallyl diphosphate = N(6)-dimethylallyladenosine(37) in tRNA + diphosphate. Functionally, catalyzes the transfer of a dimethylallyl group onto the adenine at position 37 in tRNAs that read codons beginning with uridine, leading to the formation of N6-(dimethylallyl)adenosine (i(6)A). This Lactobacillus delbrueckii subsp. bulgaricus (strain ATCC 11842 / DSM 20081 / BCRC 10696 / JCM 1002 / NBRC 13953 / NCIMB 11778 / NCTC 12712 / WDCM 00102 / Lb 14) protein is tRNA dimethylallyltransferase.